A 390-amino-acid chain; its full sequence is 8-demethyl-8-(2-methoxy-alpha-L-rhamnosyl)-tetracenomycin-C 3'-O-methyltransferase (390 aa).

S-adenosyl-L-methionine contacts are provided by residues 202–208 (ELGIGGY), Ser-217, Asp-234, 252–253 (SQ), and Asp-275. Asp-275 contributes to the Mg(2+) binding site. His-278 functions as the Proton acceptor in the catalytic mechanism. Residues Glu-303 and Asp-304 each contribute to the Mg(2+) site.

The protein belongs to the methyltransferase OleY/MycE family. Requires Mg(2+) as cofactor.

The catalysed reaction is 8-demethyl-8-(2-O-methyl-alpha-L-rhamnosyl)-tetracenomycin C + S-adenosyl-L-methionine = 8-demethyl-8-(2,3-di-O-methyl-alpha-L-rhamnosyl)-tetracenomycin C + S-adenosyl-L-homocysteine + H(+). It participates in antibiotic biosynthesis. Functionally, O-methyltransferase involved in the biosynthesis of the permethylated L-rhamnose moiety of elloramycin, an antitumor polyketide. Mediates the methylation of the hydroxy groups at the 3'-position after the sugar moiety has been attached to the aglycon. The chain is 8-demethyl-8-(2-methoxy-alpha-L-rhamnosyl)-tetracenomycin-C 3'-O-methyltransferase from Streptomyces olivaceus.